A 211-amino-acid chain; its full sequence is Uridine kinase (211 aa).

Residue 13–20 (GASASGKS) coordinates ATP.

The protein belongs to the uridine kinase family.

It is found in the cytoplasm. The enzyme catalyses uridine + ATP = UMP + ADP + H(+). The catalysed reaction is cytidine + ATP = CMP + ADP + H(+). It participates in pyrimidine metabolism; CTP biosynthesis via salvage pathway; CTP from cytidine: step 1/3. The protein operates within pyrimidine metabolism; UMP biosynthesis via salvage pathway; UMP from uridine: step 1/1. This chain is Uridine kinase, found in Shewanella pealeana (strain ATCC 700345 / ANG-SQ1).